We begin with the raw amino-acid sequence, 443 residues long: Protein UIP5 (443 aa).

The N-terminal stretch at 1 to 27 is a signal peptide; sequence MSRDVRAEKLAISLLILSLFLIFQLVA. At 28-398 the chain is on the perinuclear space side; sequence EIYLNNGDQY…LFKVVLTIWH (371 aa). Residues 399 to 420 form a helical membrane-spanning segment; it reads YSEILLLIMGIYLFSACIRVFQ. The Cytoplasmic portion of the chain corresponds to 421–443; sequence RRFKKIRSRRKRAGSHSVGLLPM.

It is found in the nucleus membrane. The chain is Protein UIP5 (UIP5) from Saccharomyces cerevisiae (strain ATCC 204508 / S288c) (Baker's yeast).